The primary structure comprises 425 residues: tRNA(Ile)-lysidine synthase (425 aa).

Residue Ser27–Ser32 participates in ATP binding.

Belongs to the tRNA(Ile)-lysidine synthase family.

Its subcellular location is the cytoplasm. It carries out the reaction cytidine(34) in tRNA(Ile2) + L-lysine + ATP = lysidine(34) in tRNA(Ile2) + AMP + diphosphate + H(+). In terms of biological role, ligates lysine onto the cytidine present at position 34 of the AUA codon-specific tRNA(Ile) that contains the anticodon CAU, in an ATP-dependent manner. Cytidine is converted to lysidine, thus changing the amino acid specificity of the tRNA from methionine to isoleucine. The protein is tRNA(Ile)-lysidine synthase of Streptococcus gordonii (strain Challis / ATCC 35105 / BCRC 15272 / CH1 / DL1 / V288).